The sequence spans 209 residues: Chaperone protein TorD (209 aa).

The protein belongs to the TorD/DmsD family. TorD subfamily.

It is found in the cytoplasm. In terms of biological role, involved in the biogenesis of TorA. Acts on TorA before the insertion of the molybdenum cofactor and, as a result, probably favors a conformation of the apoenzyme that is competent for acquiring the cofactor. The sequence is that of Chaperone protein TorD from Shewanella sp. (strain ANA-3).